Here is a 213-residue protein sequence, read N- to C-terminus: Uracil phosphoribosyltransferase (213 aa).

5-phospho-alpha-D-ribose 1-diphosphate is bound by residues arginine 78, arginine 103, and 131 to 139; that span reads DPMLATGGT. Residues isoleucine 197 and 202–204 contribute to the uracil site; that span reads GDA. Aspartate 203 is a binding site for 5-phospho-alpha-D-ribose 1-diphosphate.

Belongs to the UPRTase family. It depends on Mg(2+) as a cofactor.

It catalyses the reaction UMP + diphosphate = 5-phospho-alpha-D-ribose 1-diphosphate + uracil. It participates in pyrimidine metabolism; UMP biosynthesis via salvage pathway; UMP from uracil: step 1/1. Allosterically activated by GTP. Functionally, catalyzes the conversion of uracil and 5-phospho-alpha-D-ribose 1-diphosphate (PRPP) to UMP and diphosphate. The protein is Uracil phosphoribosyltransferase of Bifidobacterium animalis subsp. lactis (strain AD011).